Here is a 374-residue protein sequence, read N- to C-terminus: Chaperone protein DnaJ (374 aa).

Residues 5 to 70 enclose the J domain; that stretch reads DYYDVLGVAK…DKRAAYDRFG (66 aa). The CR-type zinc-finger motif lies at 131–209; that stretch reads GCEEKIRIPT…CHGQGRVQEY (79 aa). Residues Cys-144, Cys-147, Cys-161, Cys-164, Cys-183, Cys-186, Cys-197, and Cys-200 each coordinate Zn(2+). CXXCXGXG motif repeat units lie at residues 144 to 151, 161 to 168, 183 to 190, and 197 to 204; these read CKTCDGSG, CGTCGGAG, CPECHGAG, and CRDCHGQG.

This sequence belongs to the DnaJ family. As to quaternary structure, homodimer. Requires Zn(2+) as cofactor.

The protein localises to the cytoplasm. Functionally, participates actively in the response to hyperosmotic and heat shock by preventing the aggregation of stress-denatured proteins and by disaggregating proteins, also in an autonomous, DnaK-independent fashion. Unfolded proteins bind initially to DnaJ; upon interaction with the DnaJ-bound protein, DnaK hydrolyzes its bound ATP, resulting in the formation of a stable complex. GrpE releases ADP from DnaK; ATP binding to DnaK triggers the release of the substrate protein, thus completing the reaction cycle. Several rounds of ATP-dependent interactions between DnaJ, DnaK and GrpE are required for fully efficient folding. Also involved, together with DnaK and GrpE, in the DNA replication of plasmids through activation of initiation proteins. This Marinomonas sp. (strain MWYL1) protein is Chaperone protein DnaJ.